Reading from the N-terminus, the 124-residue chain is MLIRYKKSFEKIAMGLLSFMPNEKDLKQLQQTIKDYETDTDRQLFLWKEDEDIVGAIGVEKKDSEVEIRHISVNPSHRHQGIGKQMMDALKHLFKTQVLVPNELTQSFFERCQGQQDQDISYNN.

In terms of domain architecture, N-acetyltransferase spans 3–124 (IRYKKSFEKI…QQDQDISYNN (122 aa)).

In terms of biological role, involved in riboflavin biosynthesis. The chain is Protein RibT (ribT) from Bacillus subtilis (strain 168).